Consider the following 526-residue polypeptide: MNRNRKGHDLENIEHRFTDEDLAGLKEQKLFNGKWIILEKKEKRGAAYCYLVCDKPCKKFGILYLEIGEDNVTTIANQVDFYHQQSSLGYSHRFSALIDAGIINNHVFFMVVRIRAGPTLHDLLKCLSSDKMSVTTASFLAVDMISAIEILSASGWVLRNFDSKQWMLDIKTRQFYLADATDITVSSDKRHRAIDEIHLRTAESIDLHWKTGDLIYAPRSFVDRDQSHRMTELDMMEMMLYVLYDWTHGKLPWKSSKSRERIMEMKELFIENLQKEPEETNKVEQQIDVDVWFDIALRNFAKHLKVAKEEQEKLEKLPVRGGAWCPKGPRAGAQISTVNYRGIIDDFYKIVCSGRPAWALHWRDVMLDWDRKLENTPETSKMFEAYEKHQRSLEISEEWERLQATREHYTVMKNHTETEMAKNQAAIVEYLMPEEEAKEEPIDKKKDPEEEAAAAVVGKKRRGRKPKKKDDPKMELKDEVKDLKDFVVEESTSASSSAPKKRPCCSSGSPLKSSGGRRRGCEIRRK.

A disordered region spans residues 436–526 (EAKEEPIDKK…RRRGCEIRRK (91 aa)). Basic and acidic residues predominate over residues 439–448 (EEPIDKKKDP). A compositionally biased stretch (basic residues) spans 458 to 467 (GKKRRGRKPK). Residues 468–487 (KKDDPKMELKDEVKDLKDFV) are compositionally biased toward basic and acidic residues. Positions 489–498 (EESTSASSSA) are enriched in low complexity.

In terms of tissue distribution, expressed in male and female germ cells.

The protein resides in the nucleus. It localises to the chromosome. In terms of biological role, nuclear factor required for the production of piwi-interacting RNA (piRNA) precursors. Specifically required for piRNAs produced from loci associated with the Ruby motif. Promotes binding of the transcription factor snpc-4 at piRNA genomic clusters. Required for normal fertility. In Caenorhabditis elegans, this protein is piRNA biogenesis factor prde-1.